The following is a 460-amino-acid chain: Inactive 7-epi-sesquithujene synthase (460 aa).

2 residues coordinate Mg(2+): Asp-308 and Asp-312. Residues Asp-308 and Asp-312 each coordinate substrate. Positions 308–312 match the DDXXD motif motif; sequence DDMFD.

This sequence belongs to the terpene synthase family. As to quaternary structure, monomer. Mg(2+) serves as cofactor. Requires Mn(2+) as cofactor.

The protein localises to the cytoplasm. It functions in the pathway secondary metabolite biosynthesis; terpenoid biosynthesis. In terms of biological role, non-functional sesquiterpene synthase due to a frameshift removing part of the catalytic site. The polypeptide is Inactive 7-epi-sesquithujene synthase (Zea mays (Maize)).